A 462-amino-acid chain; its full sequence is L-seryl-tRNA(Sec) selenium transferase (462 aa).

Residue Lys294 is modified to N6-(pyridoxal phosphate)lysine.

Belongs to the SelA family. Homodecamer; pentamer of dimers. Binds only one seryl-tRNA(Sec) per dimer. Pyridoxal 5'-phosphate serves as cofactor.

The protein resides in the cytoplasm. It catalyses the reaction L-seryl-tRNA(Sec) + selenophosphate + H(+) = L-selenocysteinyl-tRNA(Sec) + phosphate. The protein operates within aminoacyl-tRNA biosynthesis; selenocysteinyl-tRNA(Sec) biosynthesis; selenocysteinyl-tRNA(Sec) from L-seryl-tRNA(Sec) (bacterial route): step 1/1. In terms of biological role, converts seryl-tRNA(Sec) to selenocysteinyl-tRNA(Sec) required for selenoprotein biosynthesis. The chain is L-seryl-tRNA(Sec) selenium transferase from Yersinia pseudotuberculosis serotype O:1b (strain IP 31758).